Reading from the N-terminus, the 222-residue chain is ATP-dependent Clp protease proteolytic subunit (222 aa).

The active-site Nucleophile is the Ser125. His150 is a catalytic residue.

Belongs to the peptidase S14 family. Fourteen ClpP subunits assemble into 2 heptameric rings which stack back to back to give a disk-like structure with a central cavity, resembling the structure of eukaryotic proteasomes.

It is found in the cytoplasm. The catalysed reaction is Hydrolysis of proteins to small peptides in the presence of ATP and magnesium. alpha-casein is the usual test substrate. In the absence of ATP, only oligopeptides shorter than five residues are hydrolyzed (such as succinyl-Leu-Tyr-|-NHMec, and Leu-Tyr-Leu-|-Tyr-Trp, in which cleavage of the -Tyr-|-Leu- and -Tyr-|-Trp bonds also occurs).. Its function is as follows. Cleaves peptides in various proteins in a process that requires ATP hydrolysis. Has a chymotrypsin-like activity. Plays a major role in the degradation of misfolded proteins. In Porphyromonas gingivalis (strain ATCC BAA-308 / W83), this protein is ATP-dependent Clp protease proteolytic subunit.